A 331-amino-acid polypeptide reads, in one-letter code: Biotin synthase (331 aa).

The 226-residue stretch at 52 to 277 folds into the Radical SAM core domain; sequence PDVEVEGIIS…RTMLRFAGGR (226 aa). [4Fe-4S] cluster-binding residues include cysteine 67, cysteine 71, and cysteine 74. [2Fe-2S] cluster-binding residues include cysteine 110, cysteine 143, cysteine 202, and arginine 272.

It belongs to the radical SAM superfamily. Biotin synthase family. Homodimer. The cofactor is [4Fe-4S] cluster. Requires [2Fe-2S] cluster as cofactor.

The enzyme catalyses (4R,5S)-dethiobiotin + (sulfur carrier)-SH + 2 reduced [2Fe-2S]-[ferredoxin] + 2 S-adenosyl-L-methionine = (sulfur carrier)-H + biotin + 2 5'-deoxyadenosine + 2 L-methionine + 2 oxidized [2Fe-2S]-[ferredoxin]. It participates in cofactor biosynthesis; biotin biosynthesis; biotin from 7,8-diaminononanoate: step 2/2. Functionally, catalyzes the conversion of dethiobiotin (DTB) to biotin by the insertion of a sulfur atom into dethiobiotin via a radical-based mechanism. This chain is Biotin synthase, found in Mycolicibacterium vanbaalenii (strain DSM 7251 / JCM 13017 / BCRC 16820 / KCTC 9966 / NRRL B-24157 / PYR-1) (Mycobacterium vanbaalenii).